We begin with the raw amino-acid sequence, 341 residues long: MTYRDAGVDIDAGNALVERIKPLVKRSFRPEVMGGLGGFGALFDLSGKYKEPVLVSGTDGVGTKLKLAQQLGRHDTIGIDLVGMCVNDVLVQGAEPLFFLDYFATGKLDVDTAAAVVGGIARGCALSGCALIGGETAEMPDMYPPGEYDLAGFTVGAVEKSQLLDGAQVRDGDVLIGIASSGPHSNGYSLIRKIYERAGAPAEHVLDDGTKLIDALMAPTALYVKPVLALLKSHGQAIHAMAHITGGGLTENIIRVIPDGLGLDIDASAWTLPPVFAWLQREGAVADAEMWRTFNCGIGFVLIAAPAEAAALEQALDAQSLAHWRIGQVVPAHGDERVRID.

Belongs to the AIR synthase family.

It localises to the cytoplasm. The catalysed reaction is 2-formamido-N(1)-(5-O-phospho-beta-D-ribosyl)acetamidine + ATP = 5-amino-1-(5-phospho-beta-D-ribosyl)imidazole + ADP + phosphate + H(+). Its pathway is purine metabolism; IMP biosynthesis via de novo pathway; 5-amino-1-(5-phospho-D-ribosyl)imidazole from N(2)-formyl-N(1)-(5-phospho-D-ribosyl)glycinamide: step 2/2. This is Phosphoribosylformylglycinamidine cyclo-ligase from Xanthomonas oryzae pv. oryzae (strain MAFF 311018).